Reading from the N-terminus, the 149-residue chain is Deoxyuridine 5'-triphosphate nucleotidohydrolase (149 aa).

Substrate-binding positions include 68–70, asparagine 81, 85–87, and methionine 95; these read RSG and LID.

The protein belongs to the dUTPase family. It depends on Mg(2+) as a cofactor.

It carries out the reaction dUTP + H2O = dUMP + diphosphate + H(+). Its pathway is pyrimidine metabolism; dUMP biosynthesis; dUMP from dCTP (dUTP route): step 2/2. Its function is as follows. This enzyme is involved in nucleotide metabolism: it produces dUMP, the immediate precursor of thymidine nucleotides and it decreases the intracellular concentration of dUTP so that uracil cannot be incorporated into DNA. The protein is Deoxyuridine 5'-triphosphate nucleotidohydrolase of Polynucleobacter necessarius subsp. necessarius (strain STIR1).